Reading from the N-terminus, the 1066-residue chain is Beta-galactosidase (1066 aa).

Positions 110 and 209 each coordinate substrate. Asp209 provides a ligand contact to Na(+). Glu432, His434, and Glu477 together coordinate Mg(2+). Substrate contacts are provided by residues Glu477 and Glu553–His556. Glu477 functions as the Proton donor in the catalytic mechanism. The Nucleophile role is filled by Glu553. Asn613 lines the Mg(2+) pocket. 2 residues coordinate Na(+): Phe617 and Asn620. Positions 620 and 1041 each coordinate substrate.

The protein belongs to the glycosyl hydrolase 2 family. As to quaternary structure, homotetramer. The cofactor is Mg(2+). Na(+) is required as a cofactor.

The catalysed reaction is Hydrolysis of terminal non-reducing beta-D-galactose residues in beta-D-galactosides.. This chain is Beta-galactosidase, found in Yersinia pseudotuberculosis serotype IB (strain PB1/+).